The chain runs to 630 residues: DNA topoisomerase 4 subunit B (630 aa).

Residues Tyr5, Asn42, Asp69, 110 to 116, and Lys334 contribute to the ATP site; that span reads GLHGVGI. One can recognise a Toprim domain in the interval 412-525; that stretch reads TELFLVEGDS…NGHVYVALPP (114 aa). Glu418, Asp490, and Asp492 together coordinate Mg(2+).

It belongs to the type II topoisomerase family. ParE type 1 subfamily. As to quaternary structure, heterotetramer composed of ParC and ParE. The cofactor is Mg(2+). Mn(2+) serves as cofactor. It depends on Ca(2+) as a cofactor.

The catalysed reaction is ATP-dependent breakage, passage and rejoining of double-stranded DNA.. Functionally, topoisomerase IV is essential for chromosome segregation. It relaxes supercoiled DNA. Performs the decatenation events required during the replication of a circular DNA molecule. The protein is DNA topoisomerase 4 subunit B of Salmonella typhi.